We begin with the raw amino-acid sequence, 82 residues long: Small ribosomal subunit protein bS18 (82 aa).

This sequence belongs to the bacterial ribosomal protein bS18 family. Part of the 30S ribosomal subunit. Forms a tight heterodimer with protein bS6.

Functionally, binds as a heterodimer with protein bS6 to the central domain of the 16S rRNA, where it helps stabilize the platform of the 30S subunit. In Bifidobacterium longum (strain NCC 2705), this protein is Small ribosomal subunit protein bS18.